The primary structure comprises 259 residues: UPF0246 protein Rfer_2372 (259 aa).

It belongs to the UPF0246 family.

The chain is UPF0246 protein Rfer_2372 from Albidiferax ferrireducens (strain ATCC BAA-621 / DSM 15236 / T118) (Rhodoferax ferrireducens).